A 450-amino-acid polypeptide reads, in one-letter code: Serine/threonine-protein kinase SSN3 (450 aa).

The Protein kinase domain maps to 40 to 393 (YRIIGFISSG…AAQALQSPFF (354 aa)). ATP is bound by residues 46-54 (ISSGTYGRV) and Lys71. The active-site Proton acceptor is the Asp173. 2 disordered regions span residues 307-341 (ASSH…NLEK) and 418-450 (QDDN…RQKE). Positions 310 to 326 (HHNHHSHHHPHHHHGHY) are enriched in basic residues.

It belongs to the protein kinase superfamily. CMGC Ser/Thr protein kinase family. CDC2/CDKX subfamily. As to quaternary structure, component of the SRB8-11 complex, a regulatory module of the Mediator complex. Interacts with SSN8/FCC1. Requires Mg(2+) as cofactor.

The protein resides in the nucleus. The catalysed reaction is L-seryl-[protein] + ATP = O-phospho-L-seryl-[protein] + ADP + H(+). It catalyses the reaction L-threonyl-[protein] + ATP = O-phospho-L-threonyl-[protein] + ADP + H(+). It carries out the reaction [DNA-directed RNA polymerase] + ATP = phospho-[DNA-directed RNA polymerase] + ADP + H(+). Its function is as follows. Component of the SRB8-11 complex. The SRB8-11 complex is a regulatory module of the Mediator complex which is itself involved in regulation of basal and activated RNA polymerase II-dependent transcription. The SRB8-11 complex may be involved in the transcriptional repression of a subset of genes regulated by Mediator. It may inhibit the association of the Mediator complex with RNA polymerase II to form the holoenzyme complex. The SRB8-11 complex phosphorylates the C-terminal domain (CTD) of the largest subunit of RNA polymerase II. Required for normal growth and secondary metabolism. In Gibberella moniliformis (Maize ear and stalk rot fungus), this protein is Serine/threonine-protein kinase SSN3 (SSN3).